A 569-amino-acid polypeptide reads, in one-letter code: WD repeat-containing protein 20 (569 aa).

Position 2 is an N-acetylalanine (A2). 7 WD repeats span residues 94–138 (RIYK…KETS), 139–210 (KLFN…KSTR), 211–252 (NPLL…FDSV), 253–331 (ELHG…SGSD), 332–426 (EDFQ…NSVP), 427–523 (PPLP…VPLL), and 524–559 (EPLI…CTWG). Phosphoserine is present on residues S357 and S360. Polar residues-rich tracts occupy residues 405 to 423 (NATS…TPGN) and 431 to 445 (RSNS…NAGS). A disordered region spans residues 405–445 (NATSPPAGSNGNSVTTPGNSVPPPLPRSNSLPHSAVSNAGS). Residues S432, S434, and S465 each carry the phosphoserine modification. Positions 450–468 (MDGAIASGVSKFATLSLHD) are mediates XPO1-dependent nuclear export of WDR20-USP12 complexes.

Interacts with USP12; promotes translocation of USP12/WDR20 to the plasma membrane. Component of the USP12/WDR20/WDR48 deubiquitinating complex. Interacts with USP46; contributes to the cytoplasmic localization of the USP46/WDR20 complex. Component of the USP12/DMWD/WDR48 deubiquitinating complex.

It localises to the cytoplasm. The protein resides in the nucleus. Its function is as follows. Regulator of deubiquitinating complexes. Activates deubiquitinating activity of complexes containing USP12. Anchors at the base of the ubiquitin-contacting loop of USP12 and remotely modulates the catalytic center of the enzyme. Regulates shuttling of the USP12 deubiquitinase complex between the plasma membrane, cytoplasm and nucleus. This Homo sapiens (Human) protein is WD repeat-containing protein 20 (WDR20).